Reading from the N-terminus, the 138-residue chain is Nucleoside diphosphate kinase (138 aa).

Residues Lys-9, Phe-57, Arg-85, Thr-91, Arg-102, and Asn-112 each contribute to the ATP site. The active-site Pros-phosphohistidine intermediate is His-120.

This sequence belongs to the NDK family. In terms of assembly, homotetramer. It depends on Mg(2+) as a cofactor.

The protein localises to the cytoplasm. It catalyses the reaction a 2'-deoxyribonucleoside 5'-diphosphate + ATP = a 2'-deoxyribonucleoside 5'-triphosphate + ADP. It carries out the reaction a ribonucleoside 5'-diphosphate + ATP = a ribonucleoside 5'-triphosphate + ADP. Major role in the synthesis of nucleoside triphosphates other than ATP. The ATP gamma phosphate is transferred to the NDP beta phosphate via a ping-pong mechanism, using a phosphorylated active-site intermediate. This Streptococcus agalactiae serotype V (strain ATCC BAA-611 / 2603 V/R) protein is Nucleoside diphosphate kinase.